The primary structure comprises 289 residues: 2,3-dimethylmalate lyase (289 aa).

Belongs to the isocitrate lyase/PEP mutase superfamily. In terms of assembly, homotetramer. Mg(2+) serves as cofactor.

The catalysed reaction is (2R,3S)-2,3-dimethylmalate = propanoate + pyruvate. It functions in the pathway cofactor degradation; nicotinate degradation; propanoate and pyruvate from 6-hydroxynicotinate: step 8/8. Completely inhibited by propionic anhydride and by cystamine. Irreversibly inhibited by the mercapto reagents iodoacetate and iodoacetamide. Unaffected by hydroxylamine. Functionally, catalyzes the formation of proponate and pyruvate from (2R,3S)-2,3-dimethylmalate. Has no activity toward dimethylmaleate, malate, citramalate, isocitrate and citrate. The protein is 2,3-dimethylmalate lyase of Eubacterium barkeri (Clostridium barkeri).